We begin with the raw amino-acid sequence, 170 residues long: MKKISSVIAIALFGTIATANAADLTASTTATATLVEPARITLTYKEGAPITIMDNGNIDTELLVGTLTLGGYKTGTTSTSVNFTDAAGDPMYLTFTSQDGNNHQFTTKVIGKDSRDFDISPKVNGENLVGDDVVLATGSQDFFVRSIGSKGGKLAAGKYTDAVTVTVSNQ.

A signal peptide spans 1–21 (MKKISSVIAIALFGTIATANA). The interval 100–150 (GNNHQFTTKVIGKDSRDFDISPKVNGENLVGDDVVLATGSQDFFVRSIGSK) is contains potential antigenic determinants that may stimulate T-cells.

The protein localises to the secreted. It localises to the capsule. The chain is F1 capsule antigen (caf1) from Yersinia pestis.